The sequence spans 369 residues: MSDLEQLERQILEDIAAAVDEQGIEAVRVAALGKKGTVSEKLKTLGGMSPEERQMQGPAINGLKNRVTEALSERRTELRKAAVAARLEREKVDVTLPVRESAASRGRIHPISQVIDEITAIFADMGFSIAEGPDIETDYYNFTALNFPEGHPAREMHDTFFFNPDEKGERKLLRTHTSPVQVHTMEKFAAMRDKEGRDEPIRIVIPGKTYRMDSDATHSPMFHQVEGLVVDKSANVANMKWVLEEFCKAFFEVPSVKMRMRPSFFPFTEPSVEVDIQCDRSGPHVKFGEGNDWLEILGCGMVHPNVLRMSGYDPEVYQGFAWGMGIDRIAMLKYGMPDLRAFFDADVRWIEHYGFRPLDIPTLFGGLSA.

E269 contributes to the Mg(2+) binding site.

It belongs to the class-II aminoacyl-tRNA synthetase family. Phe-tRNA synthetase alpha subunit type 1 subfamily. As to quaternary structure, tetramer of two alpha and two beta subunits. Mg(2+) serves as cofactor.

The protein resides in the cytoplasm. The enzyme catalyses tRNA(Phe) + L-phenylalanine + ATP = L-phenylalanyl-tRNA(Phe) + AMP + diphosphate + H(+). In Brucella abortus (strain 2308), this protein is Phenylalanine--tRNA ligase alpha subunit.